Reading from the N-terminus, the 192-residue chain is MNNNFEKSILLMVPQWIQYHVSHRNETTFYVYPEYLKPFLYFLRDHMSTQYKVCIDITAADYPSRASRFECVYNLLSVEYNSRIRIKTCVDEITTLESVTPVYSSAAWWEREVWDMFGVFFHNHPDLRRILTDYGFQGHPLRKDFPLSGYVEVRYDDSEKRVCIESVEYSQEFRYFDFESPWEQVDKNSLLK.

This sequence belongs to the complex I 30 kDa subunit family. In terms of assembly, complex I is composed of about 30 different subunits.

Its subcellular location is the mitochondrion inner membrane. It catalyses the reaction a ubiquinone + NADH + 5 H(+)(in) = a ubiquinol + NAD(+) + 4 H(+)(out). Functionally, core subunit of the mitochondrial membrane respiratory chain NADH dehydrogenase (Complex I) that is believed to belong to the minimal assembly required for catalysis. Complex I functions in the transfer of electrons from NADH to the respiratory chain. The immediate electron acceptor for the enzyme is believed to be ubiquinone. The polypeptide is NADH-ubiquinone oxidoreductase subunit 9 (NAD9) (Prototheca wickerhamii).